The primary structure comprises 229 residues: Cytosolic-abundant heat soluble protein 107838 (229 aa).

Positions 1–29 (MSAEAMNMNMNQDAVFIPPPEGEQYERKE) are disordered. Positions 109-145 (LSANYQKEVERKTEAYRKQQEVEADKIRKELEKQHLR) form a coiled coil. 2 CAHS motif regions span residues 124–142 (YRKQ…LEKQ) and 161–179 (QKKM…MDRE). The span at 202–218 (SSAAGTETGGQVVSESQ) shows a compositional bias: polar residues. Residues 202 to 229 (SSAAGTETGGQVVSESQKFTERNRQIKQ) are disordered. Residues 219–229 (KFTERNRQIKQ) show a composition bias toward basic and acidic residues.

It belongs to the Cytosolic-abundant heat soluble protein (CAHS) family.

The protein resides in the cytoplasm. In terms of biological role, CAHS proteins are cytosolic heat soluble proteins that seem to contribute to the anhydrobiosis in tardigrades, but their specific mechanisms are yet to be identified. It is possible that protection during anhydrobiosis might occur via the stabilization of vitrifying small molecules such as sugars, but not via the direct glass transition of CAHS proteins themselves. This is Cytosolic-abundant heat soluble protein 107838 from Paramacrobiotus richtersi (Water bear).